The following is a 341-amino-acid chain: 4-amino-5-hydroxymethyl-2-methylpyrimidine phosphate synthase (341 aa).

Lysine 62 is modified (N6-(pyridoxal phosphate)lysine). Residue histidine 66 is part of the active site. Glycine 115–glycine 118 contributes to the pyridoxal 5'-phosphate binding site. Residues cysteine 195–cysteine 199 carry the CCCFC; essential for catalytic activity, may be the site of iron coordination motif.

This sequence belongs to the NMT1/THI5 family. As to quaternary structure, homodimer. Fe cation is required as a cofactor.

The enzyme catalyses N(6)-(pyridoxal phosphate)-L-lysyl-[4-amino-5-hydroxymethyl-2-methylpyrimidine phosphate synthase] + L-histidyl-[4-amino-5-hydroxymethyl-2-methylpyrimidine phosphate synthase] + 2 Fe(3+) + 4 H2O = L-lysyl-[4-amino-5-hydroxymethyl-2-methylpyrimidine phosphate synthase] + (2S)-2-amino-5-hydroxy-4-oxopentanoyl-[4-amino-5-hydroxymethyl-2-methylpyrimidine phosphate synthase] + 4-amino-2-methyl-5-(phosphooxymethyl)pyrimidine + 3-oxopropanoate + 2 Fe(2+) + 2 H(+). Its pathway is cofactor biosynthesis; thiamine diphosphate biosynthesis. Responsible for the formation of the pyrimidine heterocycle in the thiamine biosynthesis pathway. Catalyzes the formation of hydroxymethylpyrimidine phosphate (HMP-P) from histidine and pyridoxal phosphate (PLP). The protein uses PLP and the active site histidine to form HMP-P, generating an inactive enzyme. The enzyme can only undergo a single turnover, which suggests it is a suicide enzyme. The sequence is that of 4-amino-5-hydroxymethyl-2-methylpyrimidine phosphate synthase from Uromyces fabae (Rust fungus).